The chain runs to 494 residues: 3-octaprenyl-4-hydroxybenzoate carboxy-lyase (494 aa).

Asn172 lines the Mn(2+) pocket. Residues 175–177 (IYR), 189–191 (RWL), and 194–195 (RG) contribute to the prenylated FMN site. Residue Glu238 coordinates Mn(2+). The active-site Proton donor is the Asp287.

This sequence belongs to the UbiD family. In terms of assembly, homohexamer. The cofactor is prenylated FMN. Mn(2+) serves as cofactor.

The protein localises to the cell membrane. The enzyme catalyses a 4-hydroxy-3-(all-trans-polyprenyl)benzoate + H(+) = a 2-(all-trans-polyprenyl)phenol + CO2. It participates in cofactor biosynthesis; ubiquinone biosynthesis. In terms of biological role, catalyzes the decarboxylation of 3-octaprenyl-4-hydroxy benzoate to 2-octaprenylphenol, an intermediate step in ubiquinone biosynthesis. The chain is 3-octaprenyl-4-hydroxybenzoate carboxy-lyase from Escherichia coli O139:H28 (strain E24377A / ETEC).